A 207-amino-acid polypeptide reads, in one-letter code: dTTP/UTP pyrophosphatase (207 aa).

The Proton acceptor role is filled by aspartate 79.

It belongs to the Maf family. YhdE subfamily. A divalent metal cation is required as a cofactor.

The protein resides in the cytoplasm. The enzyme catalyses dTTP + H2O = dTMP + diphosphate + H(+). It catalyses the reaction UTP + H2O = UMP + diphosphate + H(+). Its function is as follows. Nucleoside triphosphate pyrophosphatase that hydrolyzes dTTP and UTP. May have a dual role in cell division arrest and in preventing the incorporation of modified nucleotides into cellular nucleic acids. The sequence is that of dTTP/UTP pyrophosphatase from Nitrobacter winogradskyi (strain ATCC 25391 / DSM 10237 / CIP 104748 / NCIMB 11846 / Nb-255).